We begin with the raw amino-acid sequence, 443 residues long: Dynein regulatory complex protein 9 (443 aa).

2 disordered regions span residues 1–34 (MEED…TVEE) and 415–443 (GFKM…GKKK). The 30-residue stretch at 393 to 422 (ELKSVIKLQAWWRGTMIRREIGGFKMPKDK) folds into the IQ domain. Over residues 415–430 (GFKMPKDKVDSKDSKG) the composition is skewed to basic and acidic residues. Residues 431–443 (KGKGKDKRRGKKK) show a composition bias toward basic residues.

Belongs to the DRC9 family. As to quaternary structure, component of the nexin-dynein regulatory complex (N-DRC). Interacts (via IQ domain) with CALM when calcium levels are low. Does not interact with CALM in the presence of Ca(2+). Interacts with the HSP70 proteins HSPA1L and HSPA8. May form a complex with CAMK4 and HSP70.

Its subcellular location is the cytoplasm. The protein resides in the cell projection. It localises to the cilium. It is found in the flagellum. The protein localises to the cytoskeleton. Its subcellular location is the flagellum axoneme. Functionally, component of the nexin-dynein regulatory complex (N-DRC), a key regulator of ciliary/flagellar motility which maintains the alignment and integrity of the distal axoneme and regulates microtubule sliding in motile axonemes. Binds calmodulin when cellular Ca(2+) levels are low and thereby contributes to the regulation of calcium and calmodulin-dependent protein kinase IV (CAMK4) activity; contributes to the regulation of CAMK4 signaling cascades. Required for normal axoneme assembly in sperm flagella, normal sperm tail formation and for male fertility. The chain is Dynein regulatory complex protein 9 (IQCG) from Homo sapiens (Human).